The primary structure comprises 251 residues: Aspartate/glutamate leucyltransferase (251 aa).

Belongs to the R-transferase family. Bpt subfamily.

It localises to the cytoplasm. The enzyme catalyses N-terminal L-glutamyl-[protein] + L-leucyl-tRNA(Leu) = N-terminal L-leucyl-L-glutamyl-[protein] + tRNA(Leu) + H(+). It catalyses the reaction N-terminal L-aspartyl-[protein] + L-leucyl-tRNA(Leu) = N-terminal L-leucyl-L-aspartyl-[protein] + tRNA(Leu) + H(+). In terms of biological role, functions in the N-end rule pathway of protein degradation where it conjugates Leu from its aminoacyl-tRNA to the N-termini of proteins containing an N-terminal aspartate or glutamate. In Stenotrophomonas maltophilia (strain R551-3), this protein is Aspartate/glutamate leucyltransferase.